The following is a 523-amino-acid chain: GMP synthase [glutamine-hydrolyzing] (523 aa).

The region spanning lysine 8–serine 205 is the Glutamine amidotransferase type-1 domain. Residue cysteine 85 is the Nucleophile of the active site. Catalysis depends on residues histidine 179 and glutamate 181. The GMPS ATP-PPase domain occupies tryptophan 206–arginine 398. Serine 233–serine 239 is an ATP binding site.

Homodimer.

The enzyme catalyses XMP + L-glutamine + ATP + H2O = GMP + L-glutamate + AMP + diphosphate + 2 H(+). Its pathway is purine metabolism; GMP biosynthesis; GMP from XMP (L-Gln route): step 1/1. Catalyzes the synthesis of GMP from XMP. This chain is GMP synthase [glutamine-hydrolyzing], found in Haemophilus ducreyi (strain 35000HP / ATCC 700724).